Consider the following 122-residue polypeptide: MSITNEQILDAIAEMSVTQVVELISAMEEKFGVTAAAAVVAGGAAAGAAVEEQTEFNVILASAGANKVAVIKAVRGATGLGLKEAKALVDGAPAALKEGVEKAEAEALKKELEEAGATVEIK.

It belongs to the bacterial ribosomal protein bL12 family. As to quaternary structure, homodimer. Part of the ribosomal stalk of the 50S ribosomal subunit. Forms a multimeric L10(L12)X complex, where L10 forms an elongated spine to which 2 to 4 L12 dimers bind in a sequential fashion. Binds GTP-bound translation factors.

Forms part of the ribosomal stalk which helps the ribosome interact with GTP-bound translation factors. Is thus essential for accurate translation. The polypeptide is Large ribosomal subunit protein bL12 (Vibrio vulnificus (strain CMCP6)).